An 837-amino-acid chain; its full sequence is Protein translocase subunit SecA (837 aa).

Residues Gln85, 103–107 (GEGKT), and Asp493 each bind ATP. Zn(2+) is bound by residues Cys821, Cys823, Cys832, and His833.

Belongs to the SecA family. As to quaternary structure, monomer and homodimer. Part of the essential Sec protein translocation apparatus which comprises SecA, SecYEG and auxiliary proteins SecDF. Other proteins may also be involved. Requires Zn(2+) as cofactor.

The protein resides in the cell membrane. It is found in the cytoplasm. The catalysed reaction is ATP + H2O + cellular proteinSide 1 = ADP + phosphate + cellular proteinSide 2.. Functionally, part of the Sec protein translocase complex. Interacts with the SecYEG preprotein conducting channel. Has a central role in coupling the hydrolysis of ATP to the transfer of proteins into and across the cell membrane, serving as an ATP-driven molecular motor driving the stepwise translocation of polypeptide chains across the membrane. This Streptococcus pneumoniae serotype 2 (strain D39 / NCTC 7466) protein is Protein translocase subunit SecA.